Reading from the N-terminus, the 164-residue chain is Cyclic pyranopterin monophosphate synthase (164 aa).

Substrate-binding positions include 73 to 75 and 111 to 112; these read LCH and ME. The active site involves Asp-126.

Belongs to the MoaC family. As to quaternary structure, homohexamer; trimer of dimers.

It carries out the reaction (8S)-3',8-cyclo-7,8-dihydroguanosine 5'-triphosphate = cyclic pyranopterin phosphate + diphosphate. The protein operates within cofactor biosynthesis; molybdopterin biosynthesis. In terms of biological role, catalyzes the conversion of (8S)-3',8-cyclo-7,8-dihydroguanosine 5'-triphosphate to cyclic pyranopterin monophosphate (cPMP). In Herpetosiphon aurantiacus (strain ATCC 23779 / DSM 785 / 114-95), this protein is Cyclic pyranopterin monophosphate synthase.